The primary structure comprises 541 residues: MHTLIKGILEEILEEEVIVEYPKDREHGHYATPIAFNLAKVFKKSPLAIAEELALKISTHEKTQGLFDSVVACKGYINFTLSLDFLERFTQKALELKEKFGSQVKSERSQKIFLEFVSANPTGPLHIGHARGAVFGDSLAKIARFLGHEVLCEYYVNDMGSQIRLLGLSVWLAYREHVLKESVTYPEVFYKGEYIIEIAKKANNDLEPSLLKENEETIIEVLSGYARDLMLLEIKDNLDALGIHFDSYASEKEVFKHKDAVFEQLEKANALYEKDSKIWLKSSLYQDESDRVLIKEDKSYTYLAGDIVYHDEKFKQDYTKYINIWGADHHGYIARVKASLEFLGYDSNKLEVLLAQMVRLLKDNEPYKMSKRAGNFILIKDVVDDVGKDALRFIFLSKRLDTHLEFDVNTLKKQDSSNPIYYIHYANSRIHTMLEKSPFSKEEVLQTPLTNLNAEEKYLLFSALSLPKAIESSFEEYGLQKMCEYAKTLASEFHRFYNAGKILDTPKAKELLKICLIVSLSLSNAFKLLGIEIKTKISARD.

A 'HIGH' region motif is present at residues 119–129; it reads ANPTGPLHIGH.

Belongs to the class-I aminoacyl-tRNA synthetase family. Monomer.

It localises to the cytoplasm. It catalyses the reaction tRNA(Arg) + L-arginine + ATP = L-arginyl-tRNA(Arg) + AMP + diphosphate. This is Arginine--tRNA ligase (argS) from Helicobacter pylori (strain ATCC 700392 / 26695) (Campylobacter pylori).